The sequence spans 152 residues: UPF0178 protein SAR0734 (152 aa).

The protein belongs to the UPF0178 family.

This Staphylococcus aureus (strain MRSA252) protein is UPF0178 protein SAR0734.